Here is a 544-residue protein sequence, read N- to C-terminus: Chaperonin GroEL (544 aa).

Residues 29 to 32 (TIGP), 86 to 90 (DGTTT), Gly413, 478 to 480 (NAA), and Asp494 contribute to the ATP site.

Belongs to the chaperonin (HSP60) family. Forms a cylinder of 14 subunits composed of two heptameric rings stacked back-to-back. Interacts with the co-chaperonin GroES.

It is found in the cytoplasm. The enzyme catalyses ATP + H2O + a folded polypeptide = ADP + phosphate + an unfolded polypeptide.. Functionally, together with its co-chaperonin GroES, plays an essential role in assisting protein folding. The GroEL-GroES system forms a nano-cage that allows encapsulation of the non-native substrate proteins and provides a physical environment optimized to promote and accelerate protein folding. The polypeptide is Chaperonin GroEL (Exiguobacterium sp. (strain ATCC BAA-1283 / AT1b)).